Consider the following 322-residue polypeptide: N-acetyl-gamma-glutamyl-phosphate reductase (322 aa).

Cys132 is a catalytic residue.

It belongs to the NAGSA dehydrogenase family. Type 1 subfamily.

It is found in the cytoplasm. It carries out the reaction N-acetyl-L-glutamate 5-semialdehyde + phosphate + NADP(+) = N-acetyl-L-glutamyl 5-phosphate + NADPH + H(+). The protein operates within amino-acid biosynthesis; L-arginine biosynthesis; N(2)-acetyl-L-ornithine from L-glutamate: step 3/4. Catalyzes the NADPH-dependent reduction of N-acetyl-5-glutamyl phosphate to yield N-acetyl-L-glutamate 5-semialdehyde. The sequence is that of N-acetyl-gamma-glutamyl-phosphate reductase from Bacteroides fragilis (strain YCH46).